A 710-amino-acid polypeptide reads, in one-letter code: Early transcription factor 82 kDa subunit (710 aa).

Belongs to the poxviridae VETF large subunit family. Heterodimer of a 70 kDa and a 82 kDa subunit. Part of the early transcription complex composed of ETF, RAP94/OPG109, and the DNA-directed RNA polymerase.

It localises to the virion. In terms of biological role, acts with RNA polymerase to initiate transcription from early gene promoters. Is recruited by the RPO-associated protein of 94 kDa RAP94/OPG109 to form the early transcription complex, which also contains the core RNA polymerase. ETF heterodimer binds to early gene promoters. This Homo sapiens (Human) protein is Early transcription factor 82 kDa subunit (OPG133).